The following is a 199-amino-acid chain: ATP-dependent Clp protease proteolytic subunit (199 aa).

S97 functions as the Nucleophile in the catalytic mechanism. Residue H122 is part of the active site.

The protein belongs to the peptidase S14 family. As to quaternary structure, fourteen ClpP subunits assemble into 2 heptameric rings which stack back to back to give a disk-like structure with a central cavity, resembling the structure of eukaryotic proteasomes.

The protein resides in the cytoplasm. The catalysed reaction is Hydrolysis of proteins to small peptides in the presence of ATP and magnesium. alpha-casein is the usual test substrate. In the absence of ATP, only oligopeptides shorter than five residues are hydrolyzed (such as succinyl-Leu-Tyr-|-NHMec, and Leu-Tyr-Leu-|-Tyr-Trp, in which cleavage of the -Tyr-|-Leu- and -Tyr-|-Trp bonds also occurs).. Its function is as follows. Cleaves peptides in various proteins in a process that requires ATP hydrolysis. Has a chymotrypsin-like activity. Plays a major role in the degradation of misfolded proteins. This chain is ATP-dependent Clp protease proteolytic subunit, found in Geotalea daltonii (strain DSM 22248 / JCM 15807 / FRC-32) (Geobacter daltonii).